Reading from the N-terminus, the 372-residue chain is 18-hydroxynorfluorocurarine reductase (372 aa).

Positions 47, 50, 69, 70, 100, 103, 106, 114, and 172 each coordinate Zn(2+). Residues 197–202, Lys226, 283–285, Ser307, and Arg354 contribute to the NADP(+) site; these read GLGGIG and LGA.

The protein belongs to the zinc-containing alcohol dehydrogenase family. Homodimer. Zn(2+) is required as a cofactor.

The catalysed reaction is (19E)-cur-19-en-17-al + NADP(+) = norfluorocurarine + NADPH + H(+). It carries out the reaction 17,18-epoxy-17-hydroxycur-19-ene + NADP(+) = 18-hydroxynorfluorocurarine + NADPH + H(+). Its pathway is alkaloid biosynthesis. Alcohol dehydrogenase involved in the biosynthesis of curare monoterpene indole alkaloids (MIAs), natural products such as diaboline, a pharmacologically active compound used to regulate blood pressure. Curare alkaloids act as animal glycine receptor antagonists. Catalyzes the conversion of norfluorocurarine to desoxy Wieland-Gumlich aldehyde, and of 18-OH norfluorocurarine to Wieland-Gumlich aldehyde. The sequence is that of 18-hydroxynorfluorocurarine reductase from Strychnos sp.